Reading from the N-terminus, the 20-residue chain is Short cationic peptide-4a (20 aa).

At Glu20 the chain carries Glutamic acid 1-amide.

As to expression, expressed by the venom gland.

It is found in the secreted. In Cupiennius salei (American wandering spider), this protein is Short cationic peptide-4a.